The primary structure comprises 299 residues: 5-azacytidine resistance protein azr1 (299 aa).

The PPM-type phosphatase domain occupies 35–293; the sequence is KSHFPSPATL…DDTTITCLLI (259 aa).

Its function is as follows. Confers azacytidine resistance in high copy. This is 5-azacytidine resistance protein azr1 (azr1) from Schizosaccharomyces pombe (strain 972 / ATCC 24843) (Fission yeast).